The following is a 401-amino-acid chain: Acetate kinase (401 aa).

Asn7 provides a ligand contact to Mg(2+). Lys14 contacts ATP. Arg91 lines the substrate pocket. Residue Asp148 is the Proton donor/acceptor of the active site. Residues 208-212, 283-285, and 332-336 each bind ATP; these read HLGNG, DFR, and GVGEN. Position 385 (Glu385) interacts with Mg(2+).

This sequence belongs to the acetokinase family. As to quaternary structure, homodimer. Requires Mg(2+) as cofactor. The cofactor is Mn(2+).

It is found in the cytoplasm. It catalyses the reaction acetate + ATP = acetyl phosphate + ADP. It participates in metabolic intermediate biosynthesis; acetyl-CoA biosynthesis; acetyl-CoA from acetate: step 1/2. Its function is as follows. Catalyzes the formation of acetyl phosphate from acetate and ATP. Can also catalyze the reverse reaction. In Thermoanaerobacter pseudethanolicus (strain ATCC 33223 / 39E) (Clostridium thermohydrosulfuricum), this protein is Acetate kinase.